The sequence spans 580 residues: Mucolipin-1 (580 aa).

The segment at 1 to 38 is disordered; sequence MTDPAGPRGSETERLLTPNPGYGTQVGPSPAPPTPPEE. At 1 to 65 the chain is on the cytoplasmic side; it reads MTDPAGPRGS…FRAKGRKPCK (65 aa). S10 carries the phosphoserine modification. Positions 11–16 match the Dileucine motif; mediates targeting to lysosomes motif; sequence ETERLL. The interaction with phosphoinositides stretch occupies residues 42–62; sequence RRRLKYFFMSPCDKFRAKGRK. Residues 66-86 form a helical membrane-spanning segment; the sequence is LMLQVVKILVVTVQLILFGLS. Topologically, residues 87–298 are extracellular; that stretch reads NQLAVTFREE…VFRHGDNSFR (212 aa). The tract at residues 107 to 121 is extracellular/lumenal pore loop; that stretch reads LGYSDGADDTFAAYT. A disulfide bridge links C166 with C192. Residue N230 is glycosylated (N-linked (GlcNAc...) asparagine). Residues C253 and C284 are joined by a disulfide bond. A helical membrane pass occupies residues 299–321; the sequence is LLFDVVVILTCSLSFLLCARSLL. The Cytoplasmic portion of the chain corresponds to 322-350; that stretch reads RGFLLQNEFVRFMWRQRRRVISLWERLEF. Residues 351-371 traverse the membrane as a helical segment; the sequence is VNGWYILLVTSDVLTISGTIM. The Extracellular segment spans residues 372–382; that stretch reads KIGIEAKNLAS. A helical transmembrane segment spans residues 383 to 405; that stretch reads YDVCSILLGTSTLLVWVGVIRYL. The Cytoplasmic segment spans residues 406-427; the sequence is TFFHNYNILIATLRVALPSVMR. A helical membrane pass occupies residues 428 to 448; that stretch reads FCCCVAVIYLGYCFCGWIVLG. Topologically, residues 449 to 456 are extracellular; it reads PYHVKFRS. An intramembrane region (pore-forming) is located at residues 457–477; sequence LSMVSECLFSLINGDDMFVTF. A Selectivity filter motif is present at residues 469–474; it reads NGDDMF. At 478–491 the chain is on the extracellular side; that stretch reads AAMQAQQGRSSLVW. The helical transmembrane segment at 492–513 threads the bilayer; the sequence is LFSQLYLYSFISLFIYMVLSLF. Residues 514–580 lie on the Cytoplasmic side of the membrane; it reads IALITGAYDT…PSEEHSLLVN (67 aa). S557 and S559 each carry phosphoserine; by PAK. The required for palmitoylation and association with membranes stretch occupies residues 565–567; the sequence is CCC. Residues 573 to 578 carry the Dileucine internalization motif; mediates AP2 complex-dependent internalization motif; the sequence is EEHSLL.

It belongs to the transient receptor (TC 1.A.4) family. Polycystin subfamily. MCOLN1 sub-subfamily. As to quaternary structure, homotetramer. Homooligomer. Can heterooligomerize with MCOLN2 or MCOLN3; heteromeric assemblies have different channel properties as compared to the respective homooligomers and may be tissue-specific. Interacts with PDCD6. Interacts with TMEM163. Interacts with LAPTM4B. Post-translationally, palmitoylated; involved in association with membranes. Phosphorylation by PKA inhibits channel activity. Dephosphorylation increases activity. In terms of processing, proteolytically cleaved probably involving multiple lysosomal proteases including cathepsin B; inhibits lysosomal channel activity.

The protein localises to the late endosome membrane. Its subcellular location is the lysosome membrane. It is found in the cytoplasmic vesicle membrane. It localises to the cell projection. The protein resides in the phagocytic cup. The protein localises to the cytoplasmic vesicle. Its subcellular location is the phagosome membrane. It is found in the cell membrane. It carries out the reaction Ca(2+)(in) = Ca(2+)(out). It catalyses the reaction Fe(2+)(in) = Fe(2+)(out). The enzyme catalyses Mg(2+)(in) = Mg(2+)(out). The catalysed reaction is K(+)(in) = K(+)(out). It carries out the reaction Na(+)(in) = Na(+)(out). With respect to regulation, channel activity is controlled by multiple regulatory mechanisms in different subcellular compartments. Channel function is transiently modulated by changes in Ca(2+) in a pH-dependent manner; pH changes modify the aggregation state of unitary channels; a negative cooperativity between extracellular/lumenal Ca(2+) and H(+) is suggested. Regulated by phosphoinositides in a compartment-specific manner: in lysosomes activated by PtdIns(3,5)P2 (Phosphatidylinositol 3,5-bisphosphate) and at the plasma membrane inhibited by PtdIns(4,5)P2 (Phosphatidylinositol 4,5-bisphosphate). Functionally, nonselective cation channel probably playing a role in the regulation of membrane trafficking events and of metal homeostasis. Acts as a Ca(2+)-permeable cation channel with inwardly rectifying activity. Proposed to play a major role in Ca(2+) release from late endosome and lysosome vesicles to the cytoplasm, which is important for many lysosome-dependent cellular events, including the fusion and trafficking of these organelles, exocytosis and autophagy. Required for efficient uptake of large particles in macrophages in which Ca(2+) release from the lysosomes triggers lysosomal exocytosis. May also play a role in phagosome-lysosome fusion. Involved in lactosylceramide trafficking indicative for a role in the regulation of late endocytic membrane fusion/fission events. By mediating lysosomal Ca(2+) release is involved in regulation of mTORC1 signaling and in mTOR/TFEB-dependent lysosomal adaptation to environmental cues such as nutrient levels. Seems to act as lysosomal active oxygen species (ROS) sensor involved in ROS-induced TFEB activation and autophagy. Also functions as a Fe(2+) permeable channel in late endosomes and lysosomes. Also permeable to Mg(2+), Na(+). K(+) and Cs(+). Proposed to play a role in zinc homeostasis probably implicating its association with TMEM163. In adaptive immunity, TRPML2 and TRPML1 may play redundant roles in the function of the specialized lysosomes of B cells. May contribute to cellular lipase activity within the late endosomal pathway or at the cell surface which may be involved in processes of membrane reshaping and vesiculation, especially the growth of tubular structures. However, it is not known, whether it conveys the enzymatic activity directly, or merely facilitates the activity of an associated phospholipase. This Macaca fascicularis (Crab-eating macaque) protein is Mucolipin-1 (MCOLN1).